Consider the following 1019-residue polypeptide: Vacuolar membrane protease (1019 aa).

Over 1-69 the chain is Cytoplasmic; the sequence is MFLEINFYST…DRIPTVVGFR (69 aa). The chain crosses the membrane as a helical span at residues 70–90; that stretch reads VIPTTVLVLLTYLTIFTLVIV. Residues 91–404 are Vacuolar-facing; the sequence is TDWLPEPPKN…AELVIFYLND (314 aa). N-linked (GlcNAc...) asparagine glycosylation is present at Asn-158. The Zn(2+) site is built by His-195 and Asp-207. Residue Glu-239 is the Proton acceptor of the active site. Zn(2+) is bound at residue Glu-240. N-linked (GlcNAc...) asparagine glycosylation occurs at Asn-256. Positions 265 and 341 each coordinate Zn(2+). Residues 405–425 traverse the membrane as a helical segment; the sequence is LLIYNVVSLVVGPISLIFFVV. The Cytoplasmic portion of the chain corresponds to 426–466; it reads CEYVLRNERARQPNGHPVSRPSVLEWLKQRSWLRALWRRSK. The chain crosses the membrane as a helical span at residues 467–487; sequence FWIALVITIALQALLVWGYLA. The Vacuolar portion of the chain corresponds to 488-497; it reads FNSFTVYSSP. Residues 498–518 traverse the membrane as a helical segment; the sequence is YLVLISFFSLAYLSLVIPLTF. The Cytoplasmic portion of the chain corresponds to 519–539; that stretch reads TFNQTQSPTAKYIAPEREKHT. The chain crosses the membrane as a helical span at residues 540-560; the sequence is LLIQVYIFTWILLLFSTIAVA. At 561–565 the chain is on the vacuolar side; the sequence is RAQVG. Residues 566–586 form a helical membrane-spanning segment; that stretch reads GLYFVTAWNTGVWIACLLAAV. Topologically, residues 587–651 are cytoplasmic; the sequence is EGMMLPVPQG…ASLRKPQEGG (65 aa). The disordered stretch occupies residues 603–634; that stretch reads HSAHHHHHHEHEEDQDADDDDREQRQPPTEAT. The helical transmembrane segment at 652-672 threads the bilayer; the sequence is VVGWWIVHLLLTIPAPVLLIA. Topologically, residues 673 to 692 are vacuolar; the sequence is QMGSLLLDSLPQTLADGSPA. The chain crosses the membrane as a helical span at residues 693-713; that stretch reads YVVYAAASLTAVLLAVPLTPF. Residues 714–719 are Cytoplasmic-facing; it reads SGKLHR. The helical transmembrane segment at 720–740 threads the bilayer; sequence GLFFLFFLSFLIVTAYLWLAF. Residues 741–1019 are Vacuolar-facing; sequence PFSSADPLKV…LVEAWSPFSV (279 aa). N-linked (GlcNAc...) asparagine glycosylation occurs at Asn-774.

Belongs to the peptidase M28 family. Zn(2+) is required as a cofactor.

Its subcellular location is the vacuole membrane. Functionally, may be involved in vacuolar sorting and osmoregulation. The protein is Vacuolar membrane protease of Laccaria bicolor (strain S238N-H82 / ATCC MYA-4686) (Bicoloured deceiver).